A 1002-amino-acid polypeptide reads, in one-letter code: Copper-transporting ATPase HMA5 (1002 aa).

Low complexity predominate over residues 32 to 48; that stretch reads RPRYPSMPRRPRSAAVA. Residues 32–63 form a disordered region; it reads RPRYPSMPRRPRSAAVAGEGGEGGGGGGDGDL. Residues 49-60 show a composition bias toward gly residues; sequence GEGGEGGGGGGD. HMA domains follow at residues 75–141, 153–219, and 228–294; these read KVAV…FEAK, LVCR…FEAI, and SRID…SGDL. Cys86, Cys89, Cys164, and Cys167 together coordinate Cu(+). Helical transmembrane passes span 320-340, 354-374, 392-412, 425-445, 585-605, 624-644, 943-963, and 972-992; these read FLWSLVFTIPVFLTSMVFMYI, MMSIGELLRWILSTPVQFVIG, MDVLIALGTNTAYFYSVYSIL, FFETSSMLISFILLGKYLEIL, VFVPLVIILSLLTWLAWFLAG, LALQFGISVMVIACPCALGLA, YVWALGYNIIGIPIAAGVLFP, and WVAGAAMAASSVSVVCWSLLL.

This sequence belongs to the cation transport ATPase (P-type) (TC 3.A.3) family. Type IB subfamily. Expressed in root pericycle cells, xylem region of diffuse vascular bundles in the first node, and vascular tissues of peduncle, rachis and husk.

It is found in the cell membrane. The enzyme catalyses Cu(+)(in) + ATP + H2O = Cu(+)(out) + ADP + phosphate + H(+). Functionally, copper (Cu) transporter that plays an essential role in promoting translocation of Cu from roots to shoots. Involved in loading Cu to the xylem of the roots and other organs, including panicles. This is Copper-transporting ATPase HMA5 from Oryza sativa subsp. japonica (Rice).